The following is a 517-amino-acid chain: Rop guanine nucleotide exchange factor 9 (517 aa).

2 disordered regions span residues 16-76 and 428-517; these read NLDR…SETE and GEET…KDRH. Residues 39-63 are compositionally biased toward polar residues; that stretch reads MPESQTQDSLGGSPVETSRPMTSRL. The region spanning 65–429 is the PRONE domain; sequence SRRQDKQQSE…SLARKQCTGE (365 aa). Positions 66 to 76 are enriched in basic and acidic residues; that stretch reads RRQDKQQSETE. The segment covering 440-452 has biased composition (polar residues); the sequence is ETDSASAGSSNYS.

Interacts with ARAC11/ROP1 and ARAC10/ROP11. Interacts with PRK6. In terms of tissue distribution, expressed in pollen grains and pollen tubes.

The protein resides in the cell membrane. Guanine-nucleotide exchange factor (GEF) that acts as an activator of Rop (Rho of plants) GTPases by promoting the exchange of GDP for GTP. The polypeptide is Rop guanine nucleotide exchange factor 9 (Arabidopsis thaliana (Mouse-ear cress)).